The primary structure comprises 191 residues: MCGPSYCTLLLIAASCYILVCSHAKSLQGTSKLDLGNHISAGSARGSLSPASPALSEARQKRAMGDYKELTDIIDELEENSLAQKASATMQVAAMPPQGQEFDLDTMPPLTYYLLLQKLRQLQSNGEPAYRVRTPRLGRSIDSWRLLDAEGATGMAGGEEAIGGQFMQRMVKKSVPFKPRLGKRAQVCGGD.

Residues 1–24 (MCGPSYCTLLLIAASCYILVCSHA) form the signal peptide. Residues 25-119 (KSLQGTSKLD…LTYYLLLQKL (95 aa)) constitute a propeptide that is removed on maturation. 2 positions are modified to leucine amide: Leu-137 and Leu-181. The propeptide occupies 185–191 (AQVCGGD).

It belongs to the pyrokinin family. Expressed in a subgroup of neurosecretory cells in the subesophageal ganglion from embryonic stage 9 to larval stages.

Its subcellular location is the secreted. In terms of biological role, probably has a role in larval molting. The protein is Protein hugin (Hug) of Drosophila melanogaster (Fruit fly).